The chain runs to 315 residues: Fe(3+)-citrate-binding protein YfmC (315 aa).

A signal peptide spans 1-18 (MRTYSNKLIAIMSVLLLA). Residue Cys-19 is the site of N-palmitoyl cysteine attachment. A lipid anchor (S-diacylglycerol cysteine) is attached at Cys-19. Residues 27–36 (SSQNNNGSGK) show a composition bias toward low complexity. Positions 27-52 (SSQNNNGSGKSESKDSRVIHDEEGKT) are disordered. The segment covering 37 to 51 (SESKDSRVIHDEEGK) has biased composition (basic and acidic residues). Residues 60–315 (RVVVLELSFL…KDVLKKVYNK (256 aa)) form the Fe/B12 periplasmic-binding domain.

This sequence belongs to the bacterial solute-binding protein 8 family. The complex is composed of one ATP-binding protein (YfmF), two transmembrane proteins (YfmD and YfmE) and a solute-binding protein (YfmC).

It is found in the cell membrane. Part of the ABC transporter complex YfmCDEF involved in citrate-dependent Fe(3+) import. Binds citrate-dependent Fe(3+) and delivers it to the surface of YfmDE. This is Fe(3+)-citrate-binding protein YfmC (yfmC) from Bacillus subtilis (strain 168).